Here is a 573-residue protein sequence, read N- to C-terminus: Putative ATP-dependent RNA helicase R563 (573 aa).

The 177-residue stretch at 57 to 233 (INPKTPYKGL…ALTMNLLVRN (177 aa)) folds into the Helicase ATP-binding domain. ATP is bound at residue 70-77 (HRIGAGKT). A DEAH box motif is present at residues 179 to 182 (DEVH). The Helicase C-terminal domain occupies 374–551 (KILRKIKRCN…AFEKALKEAA (178 aa)).

This sequence belongs to the DEAD box helicase family. DEAH subfamily.

Its subcellular location is the virion. The enzyme catalyses ATP + H2O = ADP + phosphate + H(+). The protein is Putative ATP-dependent RNA helicase R563 of Acanthamoeba polyphaga mimivirus (APMV).